The following is a 499-amino-acid chain: Low-affinity inorganic phosphate transporter PitA (499 aa).

Topologically, residues 1–4 (MLHL) are periplasmic. The chain crosses the membrane as a helical span at residues 5–25 (FAGLDLHTGLLLLLALAFVLF). Over 26–51 (YEAINGFHDTANAVATVIYTRAMRSQ) the chain is Cytoplasmic. Residues 52–72 (LAVVMAAVFNFLGVLLGGLSV) traverse the membrane as a helical segment. At 73–93 (AYAIVHMLPTDLLLNMGSSHG) the chain is on the periplasmic side. A helical transmembrane segment spans residues 94–114 (LAMVFSMLLAAIIWNLGTWYF). Residues 115–123 (GLPASSSHT) lie on the Cytoplasmic side of the membrane. The helical transmembrane segment at 124–144 (LIGAIIGIGLTNALMTGTSVV) threads the bilayer. Residues 145–154 (DALNIPKVLS) lie on the Periplasmic side of the membrane. A helical transmembrane segment spans residues 155–175 (IFGSLIVSPIVGLVFAGGLIF). At 176–206 (LLRRYWSGTKKRARIHLTPAEREKKDGKKKP) the chain is on the cytoplasmic side. The chain crosses the membrane as a helical span at residues 207–227 (PFWTRIALILSAIGVAFSHGA). Residues 228 to 232 (NDGQK) are Periplasmic-facing. A helical transmembrane segment spans residues 233-253 (GIGLVMLVLIGVAPAGFVVNM). Topologically, residues 254-381 (NATGYEITRT…KSDMLSTIEY (128 aa)) are cytoplasmic. Residues 382 to 402 (APVWIIMAVALALGIGTMIGW) form a helical membrane-spanning segment. Topologically, residues 403–429 (RRVATTIGEKIGKKGMTYAQGMSAQMT) are periplasmic. Residues 430 to 450 (AAVSIGLASYTGMPVSTTHVL) traverse the membrane as a helical segment. Residues 451-472 (SSSVAGTMVVDGGGLQRKTVTS) lie on the Cytoplasmic side of the membrane. Residues 473–493 (ILMAWVFTLPAAVLLSGGLYW) traverse the membrane as a helical segment. The Periplasmic segment spans residues 494 to 499 (LSLQFL).

Belongs to the inorganic phosphate transporter (PiT) (TC 2.A.20) family. Pit subfamily.

The protein localises to the cell inner membrane. It catalyses the reaction phosphate(in) + H(+)(in) = phosphate(out) + H(+)(out). Functionally, low-affinity inorganic phosphate transporter. The polypeptide is Low-affinity inorganic phosphate transporter PitA (pitA) (Escherichia coli O157:H7).